Consider the following 287-residue polypeptide: Hydroxysteroid 11-beta-dehydrogenase 1-like protein (287 aa).

An N-terminal signal peptide occupies residues 1-22; it reads MKLYAKLLLCSICVAFIAVRWS. Residues 40–66, 91–92, and 118–120 contribute to the NADP(+) site; these read GASTGIGEQLAYHYARLGAQIVITARR, DM, and NHI. Residue serine 169 participates in substrate binding. Residue tyrosine 182 is the Proton acceptor of the active site. NADP(+) contacts are provided by residues 182–186 and 215–221; these read YASTK and GLIDTDS.

Belongs to the short-chain dehydrogenases/reductases (SDR) family.

Its subcellular location is the secreted. It catalyses the reaction cortisone + NADPH + H(+) = cortisol + NADP(+). Its function is as follows. Unidirectional NADP(+)-dependent cortisol dehydrogenase (in vitro). This is Hydroxysteroid 11-beta-dehydrogenase 1-like protein (hsd11b1l) from Danio rerio (Zebrafish).